The chain runs to 355 residues: Vacuolar protein sorting-associated protein 37C (355 aa).

At Ser-29 the chain carries Phosphoserine. The VPS37 C-terminal domain maps to 78-167 (VERCQEQKAK…RKPRASQELA (90 aa)). Residues 159–355 (KPRASQELAG…PPPGPAWPGY (197 aa)) are disordered. 2 stretches are compositionally biased toward pro residues: residues 170 to 186 (APPP…PQGT) and 194 to 214 (PQPP…PSLP). Residues 291–304 (APSPGYPQQSPYPA) show a composition bias toward low complexity. Pro residues predominate over residues 321–355 (PGQPQPSVPLQPPYPPGPAPPYGFPPPPGPAWPGY).

This sequence belongs to the VPS37 family. In terms of assembly, component of the ESCRT-I complex (endosomal sorting complex required for transport I) which consists of TSG101, VPS28, a VPS37 protein (VPS37A to -D) and MVB12A or MVB12B in a 1:1:1:1 stoichiometry. Interacts with TSG101, VPS28, MVB12A and MVB12B. Component of the ESCRT-I complex (endosomal sorting complex required for transport I) which consists of TSG101, VPS28, a VPS37 protein (VPS37A to -D) and UBAP1 in a 1:1:1:1 stoichiometry. Interacts with HGS and STAM2. Interacts with CEP55. In terms of processing, phosphorylated by TBK1.

The protein localises to the late endosome membrane. Component of the ESCRT-I complex, a regulator of vesicular trafficking process. Required for the sorting of endocytic ubiquitinated cargos into multivesicular bodies. May be involved in cell growth and differentiation. The protein is Vacuolar protein sorting-associated protein 37C (VPS37C) of Homo sapiens (Human).